A 121-amino-acid chain; its full sequence is Protein FAM241B (121 aa).

The disordered stretch occupies residues 12–58; sequence QDDDPRVRTTTQPPRGSIPRQSFFNRGHGAPPGGPGPRQQQAGARLG. Over residues 19-35 the composition is skewed to polar residues; sequence RTTTQPPRGSIPRQSFF. A Phosphoserine modification is found at S33. Residues 48–58 are compositionally biased toward low complexity; that stretch reads PRQQQAGARLG. S62 carries the post-translational modification Phosphoserine. Residues 92–112 traverse the membrane as a helical segment; the sequence is ILLLFLLMMLGVRGLLLVGLV.

This sequence belongs to the FAM241 family.

It localises to the membrane. Functionally, may play a role in lysosome homeostasis. The protein is Protein FAM241B of Homo sapiens (Human).